Consider the following 185-residue polypeptide: Der GTPase-activating protein YihI (185 aa).

Disordered regions lie at residues 1 to 74 and 145 to 169; these read MGRS…KKKI and EPEDDEEEIFEEAPVASKKKASSDE. Over residues 23-33 the composition is skewed to basic and acidic residues; the sequence is NRSESDVEGRE. Basic residues predominate over residues 34 to 47; the sequence is RKRVKKRKGLKSGS. The segment covering 48–68 has biased composition (basic and acidic residues); that stretch reads RHSDGSEAKQRKAALARDPRL. The span at 145-155 shows a compositional bias: acidic residues; the sequence is EPEDDEEEIFE.

The protein belongs to the YihI family. Interacts with Der.

Its function is as follows. A GTPase-activating protein (GAP) that modifies Der/EngA GTPase function. May play a role in ribosome biogenesis. The protein is Der GTPase-activating protein YihI of Vibrio atlanticus (strain LGP32) (Vibrio splendidus (strain Mel32)).